Consider the following 116-residue polypeptide: Ribulose bisphosphate carboxylase small subunit 1 (116 aa).

This sequence belongs to the RuBisCO small chain family. In terms of assembly, heterohexadecamer of 8 large and 8 small subunits.

It localises to the cytoplasm. In terms of biological role, ruBisCO catalyzes two reactions: the carboxylation of D-ribulose 1,5-bisphosphate, the primary event in carbon dioxide fixation, as well as the oxidative fragmentation of the pentose substrate. Both reactions occur simultaneously and in competition at the same active site. Although the small subunit is not catalytic it is essential for maximal activity. Can replace the endogenous type I ccbS gene in H.neapolitanus, reconstituting RuBisCO with about 10% of normal activity; the active enzyme is targeted to carboxysomes. The chain is Ribulose bisphosphate carboxylase small subunit 1 from Hydrogenovibrio crunogenus (strain DSM 25203 / XCL-2) (Thiomicrospira crunogena).